Reading from the N-terminus, the 1042-residue chain is Kinesin-like protein KIN-5A (1042 aa).

A compositionally biased stretch (low complexity) spans 1–14 (MDSNNSKKGSSVKS). Positions 1 to 45 (MDSNNSKKGSSVKSPCQTPRSTEKSNRDFRVDSNSNSNPVSKNEK) are disordered. Residues 21–31 (STEKSNRDFRV) are compositionally biased toward basic and acidic residues. Residues 32–41 (DSNSNSNPVS) are compositionally biased toward polar residues. Positions 50–392 (NIQVIVRCRP…LDYAHRAKHI (343 aa)) constitute a Kinesin motor domain. 136 to 143 (GQTGTGKT) serves as a coordination point for ATP. A coiled-coil region spans residues 480–517 (TAGLREKLDKTEKKLYETEQALLDLEEKHRQAVATIKE). The interval 1021 to 1042 (KQMQNGEAKHVSNGRPPLTAIN) is disordered.

The protein belongs to the TRAFAC class myosin-kinesin ATPase superfamily. Kinesin family. KIN-5/BimC subfamily.

It is found in the cytoplasm. Its subcellular location is the cytoskeleton. The protein resides in the spindle. In terms of biological role, responsible for microtubule translocation. May be important for the organization of phragmoplast-specific arrays of microtubules. Plays an essential role in stabilizing the mitotic spindle. Required during mitotic cytokinesis. The polypeptide is Kinesin-like protein KIN-5A (Arabidopsis thaliana (Mouse-ear cress)).